The following is a 319-amino-acid chain: Ribonuclease Z (319 aa).

Zn(2+) contacts are provided by His-62, His-64, Asp-66, His-67, His-139, Asp-209, and His-268. Asp-66 (proton acceptor) is an active-site residue.

Belongs to the RNase Z family. As to quaternary structure, homodimer. Zn(2+) serves as cofactor.

It carries out the reaction Endonucleolytic cleavage of RNA, removing extra 3' nucleotides from tRNA precursor, generating 3' termini of tRNAs. A 3'-hydroxy group is left at the tRNA terminus and a 5'-phosphoryl group is left at the trailer molecule.. Functionally, zinc phosphodiesterase, which displays some tRNA 3'-processing endonuclease activity. Probably involved in tRNA maturation, by removing a 3'-trailer from precursor tRNA. The polypeptide is Ribonuclease Z (Pseudomonas putida (strain ATCC 47054 / DSM 6125 / CFBP 8728 / NCIMB 11950 / KT2440)).